Consider the following 432-residue polypeptide: Alcohol acyltransferase 9 (432 aa).

Residues His156 and Asp379 each act as proton acceptor in the active site.

Belongs to the plant acyltransferase family. In terms of tissue distribution, expressed in fruit.

It catalyses the reaction 2-(methylsulfanyl)acetyl-CoA + butan-1-ol = butyl 2-(methylsulfanyl)acetate + CoA. The enzyme catalyses ethanol + acetyl-CoA = ethyl acetate + CoA. It carries out the reaction butan-1-ol + acetyl-CoA = butyl acetate + CoA. The catalysed reaction is butan-1-ol + propanoyl-CoA = butyl propanoate + CoA. Functionally, involved in the biosynthesis of volatile esters which confer kiwifruit flavor. Alcohol acyl transferase that can use a wide range of alcohols as substrate to produce esters. Exhibits acetyl-CoA:alcohol O-acyltransferase activity. This is Alcohol acyltransferase 9 from Actinidia eriantha (Velvet vine).